The following is a 141-amino-acid chain: Large ribosomal subunit protein uL16 (141 aa).

It belongs to the universal ribosomal protein uL16 family. In terms of assembly, part of the 50S ribosomal subunit.

Binds 23S rRNA and is also seen to make contacts with the A and possibly P site tRNAs. In Campylobacter fetus subsp. fetus (strain 82-40), this protein is Large ribosomal subunit protein uL16.